Here is a 166-residue protein sequence, read N- to C-terminus: Disulfide bond formation protein B (166 aa).

Topologically, residues 1–10 are cytoplasmic; it reads MGLNITNRQG. A helical transmembrane segment spans residues 11 to 27; the sequence is FLLVAAACAGAIGFALF. The Periplasmic portion of the chain corresponds to 28 to 45; sequence AQYQLGEEPCPLCILQRI. Residues cysteine 37 and cysteine 40 are joined by a disulfide bond. Residues 46–62 traverse the membrane as a helical segment; that stretch reads GVMAVGALALLAALHNP. The Cytoplasmic portion of the chain corresponds to 63 to 69; sequence GKTGAKV. The helical transmembrane segment at 70-86 threads the bilayer; the sequence is WGGLMTLAALSGAGVSL. The Periplasmic segment spans residues 87–143; that stretch reads RQLWLQSLPADQVPQCGPGLEFLMESFPLWEVLSKVLKGSGECAAIQGRFLGMTMPF. Cysteine 102 and cysteine 129 are joined by a disulfide. A helical transmembrane segment spans residues 144 to 162; that stretch reads WVAVFFAGVIVWTLWLVGR. Residues 163 to 166 lie on the Cytoplasmic side of the membrane; sequence RRRG.

It belongs to the DsbB family.

The protein localises to the cell inner membrane. Required for disulfide bond formation in some periplasmic proteins. Acts by oxidizing the DsbA protein. This is Disulfide bond formation protein B from Chromobacterium violaceum (strain ATCC 12472 / DSM 30191 / JCM 1249 / CCUG 213 / NBRC 12614 / NCIMB 9131 / NCTC 9757 / MK).